Reading from the N-terminus, the 859-residue chain is MSSSSSSSESSPNLSRSNSLANTMVSMKTEDHTGLYDHRQHPDSLPVRHQPPTLKNKEIAKSTKPSIPKEQKSATRYNSHVDVGSVPSRGRMDFEDEGQGMDETVAHHQLRASAILTSNARPSRLAHSMPHQRQLYVESNIHTPPKDVGVKRDYTMSSSTASSGNKSKLSASSSASPITKVRKSSLVSPVLEIPHESKSDTHSKLAKPKKRTYSTTSAHSSINPAVLLTKSTSQKSDADDDTLERKPVRMNTRASFDSDVSQASRDSQETEEDVCFPMPPQLHTRVNGIDFDELEEYAQFANAEKSQFLASLQVPNEQKYSNVSQDIGFTSSTSTSGSSAALKYTPRVSQTGEKSESTNETEIHEKKEDEHEKIKPSLHPGISFGKNKVEGEENENIPSNDPAYCSYQGTDFQIPNRFSFFCSESDETVHASDIPSLVSEGQTFYELFRGGEPTWWLDCSCPTDDEMRCIAKAFGIHPLTAEDIRMQETREKVELFKSYYFVCFHTFENDKESEDFLEPINVYIVVCRSGVLTFHFGPISHCANVRRRVRQLRDYVNVNSDWLCYALIDDITDSFAPVIQSIEYEADAIEDSVFMARDMDFAAMLQRIGESRRKTMTLMRLLSGKADVIKMFAKRCQDEANGIGPALTSQINIANLQARQDNASHIKNNSSTTVPNNYAPTTSQPRGDIALYLGDIQDHLLTMFQNLLAYEKIFSRSHTNYLAQLQVESFNSNNKVTEMLGKVTMIGTMLVPLNVITGLFGMNVKVPGENSSIAWWFGILGVLLLLAVLGWFLASYWIKRIDPPATLNEAAESGAKSVISSFLPKRNKRFNDRSKNINVRAGPSNKSVASLPSRYSRYD.

Residues 1 to 20 (MSSSSSSSESSPNLSRSNSL) show a composition bias toward low complexity. Disordered stretches follow at residues 1 to 281 (MSSS…MPPQ) and 330 to 399 (TSST…NIPS). S2 bears the N-acetylserine mark. Composition is skewed to basic and acidic residues over residues 28 to 42 (KTEDHTGLYDHRQHP) and 55 to 73 (KNKEIAKSTKPSIPKEQKS). Y77 is subject to Phosphotyrosine. S85 carries the phosphoserine modification. Residues 144-154 (PPKDVGVKRDY) are compositionally biased toward basic and acidic residues. The span at 157–176 (SSSTASSGNKSKLSASSSAS) shows a compositional bias: low complexity. Phosphoserine occurs at positions 185 and 188. Residues 193-203 (IPHESKSDTHS) are compositionally biased toward basic and acidic residues. Positions 213-235 (YSTTSAHSSINPAVLLTKSTSQK) are enriched in polar residues. S220, S221, and S236 each carry phosphoserine. T242 bears the Phosphothreonine mark. Polar residues predominate over residues 252–265 (TRASFDSDVSQASR). Low complexity predominate over residues 330-339 (TSSTSTSGSS). Residues 353–375 (EKSESTNETEIHEKKEDEHEKIK) show a composition bias toward basic and acidic residues. A run of 2 helical transmembrane segments spans residues 744 to 764 (TMIGTMLVPLNVITGLFGMNV) and 773 to 793 (IAWWFGILGVLLLLAVLGWFL). The tract at residues 830–859 (FNDRSKNINVRAGPSNKSVASLPSRYSRYD) is disordered. The residue at position 850 (S850) is a Phosphoserine.

The protein belongs to the CorA metal ion transporter (MIT) (TC 1.A.35) family.

The protein resides in the cell membrane. In terms of biological role, plasma membrane magnesium transporter. The polypeptide is Magnesium transporter ALR1 (ALR1) (Saccharomyces cerevisiae (strain ATCC 204508 / S288c) (Baker's yeast)).